The sequence spans 795 residues: Glycerol-3-phosphate acyltransferase 2, mitochondrial (795 aa).

The segment at M1 to E21 is disordered. Residues M1–Q305 lie on the Cytoplasmic side of the membrane. Positions C9–S18 are enriched in polar residues. An acyltransferase region spans residues Q180–T331. The HXXXXD motif signature appears at H205 to D210. A helical membrane pass occupies residues A306–Y332. At D333–H449 the chain is on the mitochondrial intermembrane side. Residues V450–F472 form a helical membrane-spanning segment. At K473–S795 the chain is on the cytoplasmic side. S656 bears the Phosphoserine mark. T660 bears the Phosphothreonine mark. Residues S662 and S664 each carry the phosphoserine modification.

Belongs to the GPAT/DAPAT family. In terms of assembly, interacts with PIWIL2.

The protein localises to the mitochondrion outer membrane. It catalyses the reaction sn-glycerol 3-phosphate + an acyl-CoA = a 1-acyl-sn-glycero-3-phosphate + CoA. The enzyme catalyses a 1-acyl-sn-glycero-3-phosphate + an acyl-CoA = a 1,2-diacyl-sn-glycero-3-phosphate + CoA. It carries out the reaction 1-(9Z-octadecenoyl)-sn-glycero-3-phosphate + (9Z)-octadecenoyl-CoA = 1,2-di-(9Z-octadecenoyl)-sn-glycero-3-phosphate + CoA. The catalysed reaction is 1-(9Z-octadecenoyl)-sn-glycero-3-phosphate + (5Z,8Z,11Z,14Z)-eicosatetraenoyl-CoA = 1-(9Z)-octadecenoyl-2-(5Z,8Z,11Z,14Z)-eicosatetraenoyl-sn-glycero-3-phosphate + CoA. It catalyses the reaction (5Z,8Z,11Z,14Z)-eicosatetraenoyl-CoA + sn-glycerol 3-phosphate = 1-(5Z,8Z,11Z,14Z-eicosatetraenoyl)-sn-glycero-3-phosphate + CoA. It functions in the pathway phospholipid metabolism; CDP-diacylglycerol biosynthesis; CDP-diacylglycerol from sn-glycerol 3-phosphate: step 1/3. Its activity is regulated as follows. Inhibited by N-ethylmaleimide (NEM). Functionally, transfers an acyl-group from acyl-ACP to the sn-1 position of glycerol-3-phosphate producing a lysophosphatidic acid (LPA), an essential step for the triacylglycerol (TAG) and glycerophospholipids. In vitro also transfers an acyl-group from acyl-ACP to the LPA producing a phosphatidic acid (PA). Prefers arachidonoyl-CoA as the acyl donor. Required for primary processing step during piRNA biosynthesis. Molecular mechanisms by which it promotes piRNA biosynthesis are unclear and do not involve its acyltransferase activity. This Homo sapiens (Human) protein is Glycerol-3-phosphate acyltransferase 2, mitochondrial.